The chain runs to 653 residues: Probable syringafactin export ATP-binding/permease protein SyfD (653 aa).

Positions 6–244 (LELNGVTRRF…NEKTTERLPT (239 aa)) constitute an ABC transporter domain. An ATP-binding site is contributed by 42 to 49 (GASGSGKS). Transmembrane regions (helical) follow at residues 252–272 (LMAN…ALIS), 278–298 (LLTM…VAIG), 526–546 (LALL…IGVM), 583–603 (MVCL…GYVF), and 616–636 (LGSI…FGFV).

Belongs to the ABC transporter superfamily. Macrolide exporter (TC 3.A.1.122) family. In terms of assembly, probably part of a tripartite efflux system, which is composed of an inner membrane transporter, a periplasmic membrane fusion protein, and an outer membrane component.

The protein resides in the cell inner membrane. Its function is as follows. Probably involved in the export of syringafactins. The polypeptide is Probable syringafactin export ATP-binding/permease protein SyfD (Pseudomonas syringae pv. syringae (strain B728a)).